We begin with the raw amino-acid sequence, 123 residues long: uncharacterized protein (123 aa).

An N-terminal signal peptide occupies residues Met1–Ala20. Gly96 carries GPI-anchor amidated glycine lipidation. A propeptide spans Ser97–His123 (removed in mature form).

The protein localises to the cell membrane. This is an uncharacterized protein from Schizosaccharomyces pombe (strain 972 / ATCC 24843) (Fission yeast).